The sequence spans 946 residues: Zinc finger CCCH-type antiviral protein 1 (946 aa).

Residues Met1–His254 form an N-terminal domain region. The Nuclear localization signal signature appears at Arg69–Lys76. 4 consecutive C3H1-type zinc fingers follow at residues Cys73–His86, Leu87–Leu113, Cys150–His172, and Ile173–Met194. Disordered regions lie at residues Asn221–Leu283 and Arg302–Phe354. The segment at Thr224–His254 is binding to EXOSC5. A compositionally biased stretch (basic and acidic residues) spans Ala242 to Ser257. Ser257 bears the Phosphoserine mark. Ser262 bears the Phosphoserine; by GSK3-beta mark. Phosphoserine is present on residues Ser265, Ser269, and Ser273. Position 277 is a phosphothreonine (Thr277). Residues Leu283–Val290 carry the Nuclear export signal motif. 2 positions are modified to phosphoserine: Ser324 and Ser350. The Nuclear localization signal signature appears at Lys412–Arg413. Ser425 carries the post-translational modification Phosphoserine. The tract at residues Asn461–Pro491 is disordered. Polar residues predominate over residues Gly466–Ser477. At Tyr508 the chain carries Phosphotyrosine. The interval Gly523 to Ser570 is disordered. Residues Glu524–Asn533 show a composition bias toward polar residues. The residue at position 553 (Ser553) is a Phosphoserine. Residues Pro554 to Ser567 are compositionally biased toward polar residues. Residues Ser583 and Ser680 each carry the phosphoserine modification. The WWE domain occupies Phe684 to Arg771. Residues Ser805–Lys946 form the PARP catalytic domain.

This sequence belongs to the ARTD/PARP family. Homodimer or homooligomer. Homooligomerization is essential for its antiviral activity. Interacts with EXOSC5. Interacts (via N-terminal domain) with DDX17 in an RNA-independent manner. Interacts with EXOSC3, EXOSC7, DCP2 and DCP1A. Interacts with PARN in an RNA-independent manner. Interacts with XRN1 in an RNA-dependent manner. Interacts (via N-terminal domain) with DHX30 (via N-terminus) in an RNA-independent manner. Isoform 2 interacts (via zinc-fingers) with RIGI in an RNA-dependent manner. Post-translationally, phosphorylation at Ser-273 is essential for sequential phosphorylation of Ser-269, Ser-265, Ser-262 and Ser-257 by GSK3-beta. Phosphorylation by GSK3-beta enhances its antiviral activity.

Its subcellular location is the cytoplasm. The protein resides in the nucleus. Functionally, antiviral protein which inhibits the replication of viruses by recruiting the cellular RNA degradation machineries to degrade the viral mRNAs. Binds to a ZAP-responsive element (ZRE) present in the target viral mRNA, recruits cellular poly(A)-specific ribonuclease PARN to remove the poly(A) tail, and the 3'-5' exoribonuclease complex exosome to degrade the RNA body from the 3'-end. It also recruits the decapping complex DCP1-DCP2 through RNA helicase p72 (DDX17) to remove the cap structure of the viral mRNA to initiate its degradation from the 5'-end. Its target viruses belong to families which include retroviridae: human immunodeficiency virus type 1 (HIV-1) and moloney and murine leukemia virus (MoMLV), filoviridae: ebola virus (EBOV) and marburg virus (MARV), togaviridae: sindbis virus (SINV) and Ross river virus (RRV). Specifically targets the multiply spliced but not unspliced or singly spliced HIV-1 mRNAs for degradation. Isoform 1 is a more potent viral inhibitor than isoform 2. Isoform 2 acts as a positive regulator of RIG-I signaling resulting in activation of the downstream effector IRF3 leading to the expression of type I IFNs and IFN stimulated genes (ISGs). The sequence is that of Zinc finger CCCH-type antiviral protein 1 (Zc3hav1) from Mus musculus (Mouse).